A 1198-amino-acid chain; its full sequence is Tetratricopeptide repeat protein 17 (1198 aa).

The TPR 1 repeat unit spans residues 295-328 (FTSYYTLGNIYAMLGEYNHSVLCYDHALQAKPGF). Positions 340–382 (CQQKLEQKLEAQHRSLQRTLNELKEYQKQHDHYLRQQEILEKH) form a coiled coil. 2 TPR repeats span residues 619-652 (WLILNEAGLYWRAVGNSTFAIACLQRALNLAPVQ) and 689-722 (PLTFLSLGNAYLALKNVSGALEAFRQALKLTTRC). Disordered stretches follow at residues 771–825 (PQSL…KSEE) and 903–924 (KKPKGDHKKPPGKKVEASQAEN). The span at 903 to 914 (KKPKGDHKKPPG) shows a compositional bias: basic residues. TPR repeat units lie at residues 1071-1105 (SWVLSSMAALYWRVKGQGKKAIDCLRQALHYAPHQ), 1108-1141 (DVPLISLANILHNAKLWNDAVVVATMAVEIAPHF), and 1142-1175 (AVNHFTLGNVYVAMEEFEKALVWYESTLKLQPEF).

Belongs to the TTC17 family. As to quaternary structure, interacts with CATIP. In terms of tissue distribution, expressed in germ cells as well as in somatic cells of the testis (at protein level). Ubiquitous.

It localises to the cytoplasm. Its subcellular location is the cell membrane. It is found in the cytoskeleton. Functionally, plays a role in primary ciliogenesis by modulating actin polymerization. The sequence is that of Tetratricopeptide repeat protein 17 (Ttc17) from Rattus norvegicus (Rat).